The chain runs to 332 residues: Small ribosomal subunit protein uS2 (332 aa).

The protein belongs to the universal ribosomal protein uS2 family.

The sequence is that of Small ribosomal subunit protein uS2 from Nitrobacter winogradskyi (strain ATCC 25391 / DSM 10237 / CIP 104748 / NCIMB 11846 / Nb-255).